Here is a 288-residue protein sequence, read N- to C-terminus: Alpha/beta hydrolase domain-containing protein 17B (288 aa).

Active-site charge relay system residues include serine 170, aspartate 235, and histidine 264.

Belongs to the AB hydrolase superfamily. ABHD17 family. In terms of processing, palmitoylated on cysteine residues located in a cysteine cluster at the N-terminus which promotes membrane localization.

It is found in the cell membrane. The protein resides in the recycling endosome membrane. It localises to the cell projection. The protein localises to the dendritic spine. Its subcellular location is the postsynaptic density membrane. It carries out the reaction S-hexadecanoyl-L-cysteinyl-[protein] + H2O = L-cysteinyl-[protein] + hexadecanoate + H(+). In terms of biological role, hydrolyzes fatty acids from S-acylated cysteine residues in proteins. Has depalmitoylating activity towards nras. The protein is Alpha/beta hydrolase domain-containing protein 17B of Xenopus laevis (African clawed frog).